The chain runs to 250 residues: tRNA (guanine-N(1)-)-methyltransferase (250 aa).

S-adenosyl-L-methionine is bound by residues Gly-116 and 136–141 (IGDYVL).

This sequence belongs to the RNA methyltransferase TrmD family. Homodimer.

The protein localises to the cytoplasm. The catalysed reaction is guanosine(37) in tRNA + S-adenosyl-L-methionine = N(1)-methylguanosine(37) in tRNA + S-adenosyl-L-homocysteine + H(+). Functionally, specifically methylates guanosine-37 in various tRNAs. In Pseudomonas putida (strain W619), this protein is tRNA (guanine-N(1)-)-methyltransferase.